The following is a 111-amino-acid chain: Small ribosomal subunit protein bS16 (111 aa).

The segment at E92 to E111 is disordered. Over residues E100–E111 the composition is skewed to acidic residues.

It belongs to the bacterial ribosomal protein bS16 family.

This Petrotoga mobilis (strain DSM 10674 / SJ95) protein is Small ribosomal subunit protein bS16.